Reading from the N-terminus, the 98-residue chain is Co-chaperonin GroES (98 aa).

The protein belongs to the GroES chaperonin family. In terms of assembly, heptamer of 7 subunits arranged in a ring. Interacts with the chaperonin GroEL.

Its subcellular location is the cytoplasm. Functionally, together with the chaperonin GroEL, plays an essential role in assisting protein folding. The GroEL-GroES system forms a nano-cage that allows encapsulation of the non-native substrate proteins and provides a physical environment optimized to promote and accelerate protein folding. GroES binds to the apical surface of the GroEL ring, thereby capping the opening of the GroEL channel. This Allorhizobium ampelinum (strain ATCC BAA-846 / DSM 112012 / S4) (Agrobacterium vitis (strain S4)) protein is Co-chaperonin GroES.